The primary structure comprises 460 residues: ATP synthase subunit beta 1 (460 aa).

149–156 (GGAGVGKT) lines the ATP pocket.

Belongs to the ATPase alpha/beta chains family. In terms of assembly, F-type ATPases have 2 components, CF(1) - the catalytic core - and CF(0) - the membrane proton channel. CF(1) has five subunits: alpha(3), beta(3), gamma(1), delta(1), epsilon(1). CF(0) has three main subunits: a(1), b(2) and c(9-12). The alpha and beta chains form an alternating ring which encloses part of the gamma chain. CF(1) is attached to CF(0) by a central stalk formed by the gamma and epsilon chains, while a peripheral stalk is formed by the delta and b chains.

It is found in the cell inner membrane. The catalysed reaction is ATP + H2O + 4 H(+)(in) = ADP + phosphate + 5 H(+)(out). Functionally, produces ATP from ADP in the presence of a proton gradient across the membrane. The catalytic sites are hosted primarily by the beta subunits. This is ATP synthase subunit beta 1 from Nitrosomonas eutropha (strain DSM 101675 / C91 / Nm57).